Consider the following 61-residue polypeptide: Small ribosomal subunit protein uS14 (61 aa).

4 residues coordinate Zn(2+): cysteine 24, cysteine 27, cysteine 40, and cysteine 43.

The protein belongs to the universal ribosomal protein uS14 family. Zinc-binding uS14 subfamily. Part of the 30S ribosomal subunit. Contacts proteins S3 and S10. Zn(2+) serves as cofactor.

Binds 16S rRNA, required for the assembly of 30S particles and may also be responsible for determining the conformation of the 16S rRNA at the A site. This Mycobacterium sp. (strain JLS) protein is Small ribosomal subunit protein uS14.